Consider the following 183-residue polypeptide: NADH-quinone oxidoreductase subunit A (183 aa).

3 helical membrane passes run 11–31, 63–83, and 98–118; these read IIAF…VPLL, FYLV…LYAW, and VVIF…VGAL. The tract at residues 159–183 is disordered; sequence TGQIPAQSSGRVKSKTTPALSSEKE.

It belongs to the complex I subunit 3 family. NDH-1 is composed of 14 different subunits. Subunits NuoA, H, J, K, L, M, N constitute the membrane sector of the complex.

It localises to the cell inner membrane. The enzyme catalyses a quinone + NADH + 5 H(+)(in) = a quinol + NAD(+) + 4 H(+)(out). Functionally, NDH-1 shuttles electrons from NADH, via FMN and iron-sulfur (Fe-S) centers, to quinones in the respiratory chain. The immediate electron acceptor for the enzyme in this species is believed to be ubiquinone. Couples the redox reaction to proton translocation (for every two electrons transferred, four hydrogen ions are translocated across the cytoplasmic membrane), and thus conserves the redox energy in a proton gradient. The sequence is that of NADH-quinone oxidoreductase subunit A from Acinetobacter baumannii (strain AYE).